A 654-amino-acid polypeptide reads, in one-letter code: Heat shock 70 kDa protein 2 (654 aa).

Residues 612–646 (AGGEGGAPGAGFPGAGGPGGFPGAGAGGAHSGGDD) are compositionally biased toward gly residues. The segment at 612-654 (AGGEGGAPGAGFPGAGGPGGFPGAGAGGAHSGGDDGPTVEEVD) is disordered.

This sequence belongs to the heat shock protein 70 family.

This is Heat shock 70 kDa protein 2 (HSP70-2) from Paracoccidioides lutzii (strain ATCC MYA-826 / Pb01) (Paracoccidioides brasiliensis).